The primary structure comprises 146 residues: Phospholipase A2, membrane associated (146 aa).

An N-terminal signal peptide occupies residues 1–21; the sequence is MKVLLLLAVVIMAFGSIQVQG. 7 cysteine pairs are disulfide-bonded: Cys-47–Cys-139, Cys-49–Cys-65, Cys-64–Cys-119, Cys-70–Cys-146, Cys-71–Cys-112, Cys-80–Cys-105, and Cys-98–Cys-110. Residues His-48, Gly-50, and Gly-52 each contribute to the Ca(2+) site. The active site involves His-68. Asp-69 is a Ca(2+) binding site. Asp-113 is a catalytic residue.

It belongs to the phospholipase A2 family. The cofactor is Ca(2+).

The protein localises to the secreted. It localises to the cell membrane. It is found in the mitochondrion outer membrane. The catalysed reaction is a 1,2-diacyl-sn-glycero-3-phosphoethanolamine + H2O = a 1-acyl-sn-glycero-3-phosphoethanolamine + a fatty acid + H(+). It catalyses the reaction 1-hexadecanoyl-2-(9Z-octadecenoyl)-sn-glycero-3-phosphoethanolamine + H2O = 1-hexadecanoyl-sn-glycero-3-phosphoethanolamine + (9Z)-octadecenoate + H(+). It carries out the reaction 1-hexadecanoyl-2-(9Z,12Z-octadecadienoyl)-sn-glycero-3-phosphoethanolamine + H2O = 1-hexadecanoyl-sn-glycero-3-phosphoethanolamine + (9Z,12Z)-octadecadienoate + H(+). The enzyme catalyses 1-hexadecanoyl-2-(5Z,8Z,11Z,14Z-eicosatetraenoyl)-sn-glycero-3-phosphoethanolamine + H2O = 1-hexadecanoyl-sn-glycero-3-phosphoethanolamine + (5Z,8Z,11Z,14Z)-eicosatetraenoate + H(+). The catalysed reaction is N-hexadecanoyl-1,2-di-(9Z-octadecenoyl)-sn-glycero-3-phosphoethanolamine + H2O = N-hexadecanoyl-1-(9Z-octadecenoyl)-sn-glycero-3-phosphoethanolamine + (9Z)-octadecenoate + H(+). It catalyses the reaction 1,2-dihexadecanoyl-sn-glycero-3-phospho-(1'-sn-glycerol) + H2O = 1-hexadecanoyl-sn-glycero-3-phospho-(1'-sn-glycerol) + hexadecanoate + H(+). It carries out the reaction 1-hexadecanoyl-2-(9Z-octadecenoyl)-sn-glycero-3-phosphoglycerol + H2O = 1-hexadecanoyl-sn-glycero-3-phosphoglycerol + (9Z)-octadecenoate + H(+). The enzyme catalyses 1-hexadecanoyl-2-(9Z-octadecenoyl)-sn-glycero-3-phospho-(1'-sn-glycerol) + H2O = 1-hexadecanoyl-sn-glycero-3-phospho-(1'-sn-glycerol) + (9Z)-octadecenoate + H(+). The catalysed reaction is a 1,2-diacyl-sn-glycero-3-phosphocholine + H2O = a 1-acyl-sn-glycero-3-phosphocholine + a fatty acid + H(+). It catalyses the reaction 1,2-dihexadecanoyl-sn-glycero-3-phosphocholine + H2O = 1-hexadecanoyl-sn-glycero-3-phosphocholine + hexadecanoate + H(+). It carries out the reaction 1-hexadecanoyl-2-(9Z-octadecenoyl)-sn-glycero-3-phosphocholine + H2O = 1-hexadecanoyl-sn-glycero-3-phosphocholine + (9Z)-octadecenoate + H(+). The enzyme catalyses 1-hexadecanoyl-2-(9Z,12Z-octadecadienoyl)-sn-glycero-3-phosphocholine + H2O = (9Z,12Z)-octadecadienoate + 1-hexadecanoyl-sn-glycero-3-phosphocholine + H(+). The catalysed reaction is 1-hexadecanoyl-2-(4Z,7Z,10Z,13Z,16Z,19Z-docosahexaenoyl)-sn-glycero-3-phosphocholine + H2O = (4Z,7Z,10Z,13Z,16Z,19Z)-docosahexaenoate + 1-hexadecanoyl-sn-glycero-3-phosphocholine + H(+). Secretory calcium-dependent phospholipase A2 that primarily targets extracellular phospholipids with implications in host antimicrobial defense, inflammatory response and tissue regeneration. Hydrolyzes the ester bond of the fatty acyl group attached at sn-2 position of phospholipids (phospholipase A2 activity) with preference for phosphatidylethanolamines and phosphatidylglycerols over phosphatidylcholines. Contributes to lipid remodeling of cellular membranes and generation of lipid mediators involved in pathogen clearance. Displays bactericidal activity against Gram-positive bacteria by directly hydrolyzing phospholipids of the bacterial membrane. Upon sterile inflammation, targets membrane phospholipids of extracellular mitochondria released from activated platelets, generating free unsaturated fatty acids such as arachidonate that is used by neighboring leukocytes to synthesize inflammatory eicosanoids such as leukotrienes. Simultaneously, by compromising mitochondrial membrane integrity, promotes the release in circulation of potent damage-associated molecular pattern molecules that activate the innate immune response. Plays a stem cell regulator role in the intestinal crypt. Within intracellular compartment mediates Paneth cell differentiation and its stem cell supporting functions by inhibiting Wnt signaling pathway in intestinal stem cell (ICS). Secreted in the intestinal lumen upon inflammation, acts in an autocrine way and promotes prostaglandin E2 synthesis that stimulates Wnt signaling pathway in ICS cells and tissue regeneration. May play a role in the biosynthesis of N-acyl ethanolamines that regulate energy metabolism and inflammation. Hydrolyzes N-acyl phosphatidylethanolamines to N-acyl lysophosphatidylethanolamines, which are further cleaved by a lysophospholipase D to release N-acyl ethanolamines. Independent of its catalytic activity, acts as a ligand for integrins. Binds to and activates integrins ITGAV:ITGB3, ITGA4:ITGB1 and ITGA5:ITGB1. Binds to a site (site 2) which is distinct from the classical ligand-binding site (site 1) and induces integrin conformational changes and enhanced ligand binding to site 1. Induces cell proliferation in an integrin-dependent manner. The sequence is that of Phospholipase A2, membrane associated (Pla2g2a) from Rattus norvegicus (Rat).